The primary structure comprises 108 residues: Large ribosomal subunit protein uL24 (108 aa).

Belongs to the universal ribosomal protein uL24 family. In terms of assembly, part of the 50S ribosomal subunit.

Functionally, one of two assembly initiator proteins, it binds directly to the 5'-end of the 23S rRNA, where it nucleates assembly of the 50S subunit. One of the proteins that surrounds the polypeptide exit tunnel on the outside of the subunit. The protein is Large ribosomal subunit protein uL24 of Trichlorobacter lovleyi (strain ATCC BAA-1151 / DSM 17278 / SZ) (Geobacter lovleyi).